Here is a 367-residue protein sequence, read N- to C-terminus: Anhydro-N-acetylmuramic acid kinase (367 aa).

An ATP-binding site is contributed by 11–18 (GTSLDGVD).

The protein belongs to the anhydro-N-acetylmuramic acid kinase family.

The enzyme catalyses 1,6-anhydro-N-acetyl-beta-muramate + ATP + H2O = N-acetyl-D-muramate 6-phosphate + ADP + H(+). It functions in the pathway amino-sugar metabolism; 1,6-anhydro-N-acetylmuramate degradation. The protein operates within cell wall biogenesis; peptidoglycan recycling. Catalyzes the specific phosphorylation of 1,6-anhydro-N-acetylmuramic acid (anhMurNAc) with the simultaneous cleavage of the 1,6-anhydro ring, generating MurNAc-6-P. Is required for the utilization of anhMurNAc either imported from the medium or derived from its own cell wall murein, and thus plays a role in cell wall recycling. The protein is Anhydro-N-acetylmuramic acid kinase of Rhodopseudomonas palustris (strain HaA2).